Consider the following 98-residue polypeptide: Large ribosomal subunit protein uL23 (98 aa).

This sequence belongs to the universal ribosomal protein uL23 family. Part of the 50S ribosomal subunit. Contacts protein L29, and trigger factor when it is bound to the ribosome.

One of the early assembly proteins it binds 23S rRNA. One of the proteins that surrounds the polypeptide exit tunnel on the outside of the ribosome. Forms the main docking site for trigger factor binding to the ribosome. This chain is Large ribosomal subunit protein uL23, found in Cellvibrio japonicus (strain Ueda107) (Pseudomonas fluorescens subsp. cellulosa).